The sequence spans 447 residues: Ribosomal protein uS12 methylthiotransferase RimO (447 aa).

Residues 4–114 form the MTTase N-terminal domain; the sequence is PKVGFVSLGC…VMEAVHEYVP (111 aa). Residues C13, C49, C78, C147, C151, and C154 each coordinate [4Fe-4S] cluster. Residues 133–370 enclose the Radical SAM core domain; the sequence is LTPKHYAYLK…MQVQQQISAA (238 aa). The region spanning 373-443 is the TRAM domain; that stretch reads QKRIGQTMTV…EYDLFAKLIK (71 aa).

This sequence belongs to the methylthiotransferase family. RimO subfamily. [4Fe-4S] cluster serves as cofactor.

The protein resides in the cytoplasm. It catalyses the reaction L-aspartate(89)-[ribosomal protein uS12]-hydrogen + (sulfur carrier)-SH + AH2 + 2 S-adenosyl-L-methionine = 3-methylsulfanyl-L-aspartate(89)-[ribosomal protein uS12]-hydrogen + (sulfur carrier)-H + 5'-deoxyadenosine + L-methionine + A + S-adenosyl-L-homocysteine + 2 H(+). Its function is as follows. Catalyzes the methylthiolation of an aspartic acid residue of ribosomal protein uS12. In Acinetobacter baumannii (strain AB307-0294), this protein is Ribosomal protein uS12 methylthiotransferase RimO.